Here is a 525-residue protein sequence, read N- to C-terminus: MAAGGSGGRASCPPGVGVGPGTGGSPGPSANAAATPAPGNAAAAAAAAAAAAAAPGPTPPAPPGPGTDAQAAGAERAEEAAGPGAAALQREAAYNWQASKPTVQERFAFLFNNEVLCDVHFLVGKGLSSQRIPAHRFVLAVGSAVFDAMFNGGMATTSTEIELPDVEPAAFLALLKFLYSDEVQIGPETVMTTLYTAKKYAVPALEAHCVEFLKKNLRADNAFMLLTQARLFDEPQLASLCLENIDKNTADAITAEGFTDIDLDTLVAVLERDTLGIREVRLFNAVVRWSEAECQRQQLQVTPENRRKVLGKALGLIRFPLMTIEEFAAGPAQSGILVDREVVSLFLHFTVNPKPRVEFIDRPRCCLRGKECSINRFQQVESRWGYSGTSDRIRFSVNKRIFVVGFGLYGSIHGPTDYQVNIQIIHTDSNTVLGQNDTGFSCDGSASTFRVMFKEPVEVLPNVNYTACATLKGPDSHYGTKGLRKVTHESPTTGAKTCFTFCYAAGNNNGTSVEDGQIPEVIFYT.

The interval 1–86 is disordered; the sequence is MAAGGSGGRA…AEEAAGPGAA (86 aa). The span at 16-26 shows a compositional bias: gly residues; sequence VGVGPGTGGSP. A compositionally biased stretch (low complexity) spans 27–55; the sequence is GPSANAAATPAPGNAAAAAAAAAAAAAAP. The segment covering 56–65 has biased composition (pro residues); it reads GPTPPAPPGP. The segment covering 66-86 has biased composition (low complexity); that stretch reads GTDAQAAGAERAEEAAGPGAA. Residues 117–187 form the BTB domain; it reads CDVHFLVGKG…LYSDEVQIGP (71 aa).

As to quaternary structure, interacts with topoisomerase 1 and with TRIM5 isoform Delta.

The protein resides in the cytoplasm. This chain is BTB/POZ domain-containing protein 2 (BTBD2), found in Homo sapiens (Human).